We begin with the raw amino-acid sequence, 396 residues long: Initiation-specific alpha-1,6-mannosyltransferase (396 aa).

Residues 1-7 are Cytoplasmic-facing; it reads MLRLRLR. The chain crosses the membrane as a helical; Signal-anchor for type II membrane protein span at residues 8–28; it reads SIVIGAAIAGSILLLFNHGSI. Over 29-396 the chain is Lumenal; that stretch reads EGMEDLTEIS…HFFAGSWKDD (368 aa). Positions 229 to 231 match the DXD motif motif; that stretch reads DID. Asparagine 345 carries an N-linked (GlcNAc...) asparagine glycan.

Belongs to the glycosyltransferase 32 family. The cofactor is Mn(2+).

The protein localises to the endoplasmic reticulum membrane. It is found in the golgi apparatus membrane. The enzyme catalyses Transfers an alpha-D-mannosyl residue from GDP-mannose into lipid-linked oligosaccharide, forming an alpha-(1-&gt;6)-D-mannosyl-D-mannose linkage.. Functionally, mannosyltransferase involved in outer chain elongation of asparagine-linked oligosaccharides of the type Man(9)GlcNAc(2). May otherwise add the first alpha-1,6-mannose to the Man(8)GlcNAc(2) core oligosaccharide from the ER. Represents the first enzymatic event required for synthesis of outer chain mannose linkages on yeast secretory proteins. In Schizosaccharomyces pombe (strain 972 / ATCC 24843) (Fission yeast), this protein is Initiation-specific alpha-1,6-mannosyltransferase.